Here is a 152-residue protein sequence, read N- to C-terminus: Endoribonuclease YbeY (152 aa).

His113, His117, and His123 together coordinate Zn(2+).

It belongs to the endoribonuclease YbeY family. The cofactor is Zn(2+).

Its subcellular location is the cytoplasm. Functionally, single strand-specific metallo-endoribonuclease involved in late-stage 70S ribosome quality control and in maturation of the 3' terminus of the 16S rRNA. This is Endoribonuclease YbeY from Janthinobacterium sp. (strain Marseille) (Minibacterium massiliensis).